The sequence spans 385 residues: Outer membrane protein assembly factor BamB (385 aa).

An N-terminal signal peptide occupies residues 1-20 (MRKVLKKAALCTFGFSMLFG). Cysteine 21 carries the N-palmitoyl cysteine lipid modification. Residue cysteine 21 is the site of S-diacylglycerol cysteine attachment.

The protein belongs to the BamB family. In terms of assembly, part of the Bam complex.

The protein resides in the cell outer membrane. In terms of biological role, part of the outer membrane protein assembly complex, which is involved in assembly and insertion of beta-barrel proteins into the outer membrane. The chain is Outer membrane protein assembly factor BamB from Aliivibrio fischeri (strain ATCC 700601 / ES114) (Vibrio fischeri).